A 475-amino-acid chain; its full sequence is Arginine biosynthesis bifunctional protein ArgJ 1, mitochondrial (475 aa).

6 residues coordinate substrate: threonine 204, lysine 233, threonine 244, glutamate 331, asparagine 470, and threonine 475. Threonine 244 (nucleophile) is an active-site residue.

Belongs to the ArgJ family. In terms of assembly, heterodimer of an alpha and a beta chain. Post-translationally, the alpha and beta chains are autoproteolytically processed from a single precursor protein within the mitochondrion.

Its subcellular location is the mitochondrion matrix. The enzyme catalyses N(2)-acetyl-L-ornithine + L-glutamate = N-acetyl-L-glutamate + L-ornithine. It carries out the reaction L-glutamate + acetyl-CoA = N-acetyl-L-glutamate + CoA + H(+). It functions in the pathway amino-acid biosynthesis; L-arginine biosynthesis; L-ornithine and N-acetyl-L-glutamate from L-glutamate and N(2)-acetyl-L-ornithine (cyclic): step 1/1. The protein operates within amino-acid biosynthesis; L-arginine biosynthesis; N(2)-acetyl-L-ornithine from L-glutamate: step 1/4. Catalyzes two activities which are involved in the cyclic version of arginine biosynthesis: the synthesis of acetylglutamate from glutamate and acetyl-CoA, and of ornithine by transacetylation between acetylornithine and glutamate. This is Arginine biosynthesis bifunctional protein ArgJ 1, mitochondrial from Botryotinia fuckeliana (strain B05.10) (Noble rot fungus).